The following is a 394-amino-acid chain: Flap endonuclease 1 (394 aa).

Residues 1-104 form an N-domain region; sequence MGIKQLFSII…GELAKRFQRK (104 aa). Aspartate 34 contributes to the Mg(2+) binding site. 2 residues coordinate DNA: arginine 47 and arginine 70. Residues aspartate 86, glutamate 158, glutamate 160, aspartate 179, and aspartate 181 each contribute to the Mg(2+) site. Residues 122–253 are I-domain; the sequence is DVEKFSRRTV…STALKLIREH (132 aa). Glutamate 158 serves as a coordination point for DNA. Positions 231 and 233 each coordinate DNA. A Mg(2+)-binding site is contributed by aspartate 233. The segment at 341-349 is interaction with PCNA; the sequence is QQARIEGFF. Residues 356–383 are compositionally biased toward basic and acidic residues; the sequence is EEEKKAHKRKLEEQAEQKRKKVKEEKKE. The disordered stretch occupies residues 356 to 394; the sequence is EEEKKAHKRKLEEQAEQKRKKVKEEKKEKAKLKAKPRGA. Residues 384-394 show a composition bias toward basic residues; sequence KAKLKAKPRGA.

Belongs to the XPG/RAD2 endonuclease family. FEN1 subfamily. In terms of assembly, interacts with PCNA. Three molecules of FEN1 bind to one PCNA trimer with each molecule binding to one PCNA monomer. PCNA stimulates the nuclease activity without altering cleavage specificity. Mg(2+) serves as cofactor. Post-translationally, phosphorylated. Phosphorylation upon DNA damage induces relocalization to the nuclear plasma.

It localises to the nucleus. The protein localises to the nucleolus. Its subcellular location is the nucleoplasm. It is found in the mitochondrion. In terms of biological role, structure-specific nuclease with 5'-flap endonuclease and 5'-3' exonuclease activities involved in DNA replication and repair. During DNA replication, cleaves the 5'-overhanging flap structure that is generated by displacement synthesis when DNA polymerase encounters the 5'-end of a downstream Okazaki fragment. It enters the flap from the 5'-end and then tracks to cleave the flap base, leaving a nick for ligation. Also involved in the long patch base excision repair (LP-BER) pathway, by cleaving within the apurinic/apyrimidinic (AP) site-terminated flap. Acts as a genome stabilization factor that prevents flaps from equilibrating into structures that lead to duplications and deletions. Also possesses 5'-3' exonuclease activity on nicked or gapped double-stranded DNA, and exhibits RNase H activity. Also involved in replication and repair of rDNA and in repairing mitochondrial DNA. This is Flap endonuclease 1 from Sordaria macrospora (strain ATCC MYA-333 / DSM 997 / K(L3346) / K-hell).